The primary structure comprises 287 residues: Endolytic peptidoglycan transglycosylase RlpA (287 aa).

Residues 1 to 25 form the signal peptide; it reads MKLKTGLNLTALLLFMISVAFPAQA. One can recognise an SPOR domain in the interval 209–284; that stretch reads LKGTEFYCLK…ANNKPLIVYT (76 aa).

The protein belongs to the RlpA family.

Functionally, lytic transglycosylase with a strong preference for naked glycan strands that lack stem peptides. The sequence is that of Endolytic peptidoglycan transglycosylase RlpA from Haemophilus influenzae (strain ATCC 51907 / DSM 11121 / KW20 / Rd).